Reading from the N-terminus, the 243-residue chain is Venom nerve growth factor 3 (243 aa).

Residues 1–18 (MSMLCYTLIIAFLIGIWA) form the signal peptide. A propeptide spanning residues 19–125 (APKSEDNVPL…ALNRNIRAKR (107 aa)) is cleaved from the precursor. Basic and acidic residues predominate over residues 47 to 66 (GLKTSRNTDQRHPAPKKAED). Residues 47 to 67 (GLKTSRNTDQRHPAPKKAEDQ) form a disordered region. 3 cysteine pairs are disulfide-bonded: C139/C204, C182/C232, and C192/C234. N-linked (GlcNAc...) asparagine glycans are attached at residues N148 and N151.

Belongs to the NGF-beta family. In terms of assembly, homodimer; non-covalently linked. Expressed by the venom gland.

The protein localises to the secreted. Its function is as follows. Nerve growth factor is important for the development and maintenance of the sympathetic and sensory nervous systems. It stimulates division and differentiation of sympathetic and embryonic sensory neurons as well as basal forebrain cholinergic neurons in the brain. Its relevance in the snake venom is not clear. However, it has been shown to inhibit metalloproteinase-dependent proteolysis of platelet glycoprotein Ib alpha, suggesting a metalloproteinase inhibition to prevent metalloprotease autodigestion and/or protection against prey proteases. Binds a lipid between the two protein chains in the homodimer. The lipid-bound form promotes histamine relase from mouse mast cells, contrary to the lipid-free form. In Tropidechis carinatus (Australian rough-scaled snake), this protein is Venom nerve growth factor 3.